The sequence spans 366 residues: Carboxy-cis,cis-muconate cyclase (366 aa).

Residues His-149, Arg-197, Glu-213, and Arg-275 contribute to the active site.

Belongs to the cycloisomerase 2 family. Homotetramer.

It catalyses the reaction 3-carboxy-2,5-dihydro-5-oxofuran-2-acetate = 3-carboxy-cis,cis-muconate. The protein operates within aromatic compound metabolism; beta-ketoadipate pathway; 3-carboxy-cis,cis-muconate from 3-carboxy-2,5-dihydro-5-oxofuran-2-acetate: step 1/1. Functionally, catalyzes a syn cycloisomerization. Also possesses mle activity. This Neurospora crassa (strain ATCC 24698 / 74-OR23-1A / CBS 708.71 / DSM 1257 / FGSC 987) protein is Carboxy-cis,cis-muconate cyclase.